A 142-amino-acid chain; its full sequence is Large ribosomal subunit protein uL11 (142 aa).

It belongs to the universal ribosomal protein uL11 family. Part of the ribosomal stalk of the 50S ribosomal subunit. Interacts with L10 and the large rRNA to form the base of the stalk. L10 forms an elongated spine to which L12 dimers bind in a sequential fashion forming a multimeric L10(L12)X complex. Post-translationally, one or more lysine residues are methylated.

Functionally, forms part of the ribosomal stalk which helps the ribosome interact with GTP-bound translation factors. This Proteus mirabilis (strain HI4320) protein is Large ribosomal subunit protein uL11.